We begin with the raw amino-acid sequence, 488 residues long: Dihydrolipoyl dehydrogenase, mitochondrial (488 aa).

The N-terminal 25 residues, 1-25 (MLRINRISNLRTFGQRFFSTEQQDV), are a transit peptide targeting the mitochondrion. Residues 52–61 (EKRGKLGGTC), K70, G134, and 163–165 (TGS) contribute to the FAD site. A disulfide bridge links C61 with C66. NAD(+)-binding positions include 200–207 (GGGVIGLE), E223, V257, and G294. Residues D335 and 341–344 (MLAH) each bind FAD. Residue H467 is the Proton acceptor of the active site.

It belongs to the class-I pyridine nucleotide-disulfide oxidoreductase family. FAD serves as cofactor.

The protein localises to the mitochondrion matrix. The enzyme catalyses N(6)-[(R)-dihydrolipoyl]-L-lysyl-[protein] + NAD(+) = N(6)-[(R)-lipoyl]-L-lysyl-[protein] + NADH + H(+). The protein is Dihydrolipoyl dehydrogenase, mitochondrial (lpd) of Dictyostelium discoideum (Social amoeba).